A 352-amino-acid chain; its full sequence is Phosphoribosylformylglycinamidine cyclo-ligase (352 aa).

It belongs to the AIR synthase family.

The protein localises to the cytoplasm. It catalyses the reaction 2-formamido-N(1)-(5-O-phospho-beta-D-ribosyl)acetamidine + ATP = 5-amino-1-(5-phospho-beta-D-ribosyl)imidazole + ADP + phosphate + H(+). Its pathway is purine metabolism; IMP biosynthesis via de novo pathway; 5-amino-1-(5-phospho-D-ribosyl)imidazole from N(2)-formyl-N(1)-(5-phospho-D-ribosyl)glycinamide: step 2/2. This Nitrosospira multiformis (strain ATCC 25196 / NCIMB 11849 / C 71) protein is Phosphoribosylformylglycinamidine cyclo-ligase.